Consider the following 153-residue polypeptide: Small ribosomal subunit protein uS17 (153 aa).

This sequence belongs to the universal ribosomal protein uS17 family.

This chain is Small ribosomal subunit protein uS17 (RpS11), found in Anopheles gambiae (African malaria mosquito).